The primary structure comprises 924 residues: Hexokinase-3 (924 aa).

The tract at residues 1 to 27 (MAAIEPSGLHPGERDSSCPQEGIPRPS) is disordered. Hexokinase domains follow at residues 27–471 (SGSL…MVTA) and 477–913 (ATHR…LVTR). The hexokinase small subdomain 1 stretch occupies residues 84-220 (HGTEQGDFLV…TYNIDVVAMV (137 aa)). Residue 95 to 102 (ELGATGAS) participates in ATP binding. 95–104 (ELGATGASLR) contacts D-glucose 6-phosphate. Residues serine 168, 185–186 (TK), and 221–222 (ND) each bind D-glucose. Residues 221 to 460 (NDTVGTMMGC…CDVSFIPSVD (240 aa)) form a hexokinase large subdomain 1 region. 2 residues coordinate D-glucose 6-phosphate: aspartate 222 and threonine 245. D-glucose is bound by residues asparagine 248, glutamate 273, and 304–307 (QRFE). 426–428 (GGR) is a D-glucose 6-phosphate binding site. ATP contacts are provided by residues 438–439 (CI) and 542–547 (DLGGTN). Residues 531 to 662 (DGSERGDFLA…AVELNVVAIV (132 aa)) are hexokinase small subdomain 2. 542-546 (DLGGT) contributes to the D-glucose 6-phosphate binding site. D-glucose is bound by residues 610 to 611 (SF), 627 to 628 (TK), and 663 to 664 (ND). Residues 663–902 (NDTVGTMMSC…CTVTFLQSED (240 aa)) form a hexokinase large subdomain 2 region. D-glucose 6-phosphate-binding residues include aspartate 664 and threonine 687. Threonine 687 contributes to the ATP binding site. D-glucose contacts are provided by residues 689–690 (TN), glutamate 715, and glutamate 749. Residues 754–755 (GM), 791–795 (TKFLS), and 870–874 (TLYKL) each bind ATP. Residues 868-870 (DGT) and serine 904 contribute to the D-glucose 6-phosphate site.

It belongs to the hexokinase family.

The enzyme catalyses a D-hexose + ATP = a D-hexose 6-phosphate + ADP + H(+). It catalyses the reaction D-fructose + ATP = D-fructose 6-phosphate + ADP + H(+). The catalysed reaction is D-glucose + ATP = D-glucose 6-phosphate + ADP + H(+). It functions in the pathway carbohydrate metabolism; hexose metabolism. The protein operates within carbohydrate degradation; glycolysis; D-glyceraldehyde 3-phosphate and glycerone phosphate from D-glucose: step 1/4. With respect to regulation, hexokinase is an allosteric enzyme inhibited by its product D-glucose 6-phosphate. In terms of biological role, catalyzes the phosphorylation of hexose, such as D-glucose and D-fructose, to hexose 6-phosphate (D-glucose 6-phosphate and D-fructose 6-phosphate, respectively). Mediates the initial step of glycolysis by catalyzing phosphorylation of D-glucose to D-glucose 6-phosphate. The polypeptide is Hexokinase-3 (Rattus norvegicus (Rat)).